The chain runs to 437 residues: Ribosomal protein uS12 methylthiotransferase RimO (437 aa).

An MTTase N-terminal domain is found at 9-128 (NKINVITLGC…LLKALGADYK (120 aa)). [4Fe-4S] cluster is bound by residues cysteine 18, cysteine 57, cysteine 91, cysteine 152, cysteine 156, and cysteine 159. The Radical SAM core domain maps to 138–368 (TTPKNYAYLK…MELQSQISWD (231 aa)). The TRAM domain occupies 371 to 437 (QEKVGQVFRC…TEFDLYGEPA (67 aa)).

It belongs to the methylthiotransferase family. RimO subfamily. The cofactor is [4Fe-4S] cluster.

The protein localises to the cytoplasm. The enzyme catalyses L-aspartate(89)-[ribosomal protein uS12]-hydrogen + (sulfur carrier)-SH + AH2 + 2 S-adenosyl-L-methionine = 3-methylsulfanyl-L-aspartate(89)-[ribosomal protein uS12]-hydrogen + (sulfur carrier)-H + 5'-deoxyadenosine + L-methionine + A + S-adenosyl-L-homocysteine + 2 H(+). Catalyzes the methylthiolation of an aspartic acid residue of ribosomal protein uS12. The sequence is that of Ribosomal protein uS12 methylthiotransferase RimO from Flavobacterium johnsoniae (strain ATCC 17061 / DSM 2064 / JCM 8514 / BCRC 14874 / CCUG 350202 / NBRC 14942 / NCIMB 11054 / UW101) (Cytophaga johnsonae).